Reading from the N-terminus, the 748-residue chain is Rho GTPase-activating protein 24 (748 aa).

The segment at 1-20 is disordered; that stretch reads MEENNDSTENPQQGQGRQNA. The span at 7–18 shows a compositional bias: polar residues; sequence STENPQQGQGRQ. The PH domain occupies 19–125; that stretch reads NAIKCGWLRK…WVKSIRRVIW (107 aa). In terms of domain architecture, Rho-GAP spans 135 to 329; it reads QKLEDTVRYE…VMISKHDCLF (195 aa). 2 disordered regions span residues 354–476 and 582–641; these read TMGQ…GTHS and DFFG…SSNH. Polar residues-rich tracts occupy residues 356-374 and 382-405; these read GQLQNKENNNTKDSPSRQC and PQRSSMNNGSPTALSGSKTNSPKN. Phosphoserine occurs at positions 369, 391, 396, 398, 402, 413, 415, and 437. Over residues 432–476 the composition is skewed to polar residues; it reads IVTNGSFSSSNAEGLEKTQTTPNGSLQARRSSSLKVSGTKMGTHS. A Phosphothreonine modification is found at Thr-452. The span at 600-615 shows a compositional bias: basic and acidic residues; sequence DLSHPRDYESKSDHRS. The segment covering 617–641 has biased composition (low complexity); that stretch reads GGRSSRATSSSDNSETFVGNSSSNH. Residues 649-729 are a coiled coil; that stretch reads SSLKQEMTKQ…KEMEQFFSTF (81 aa).

In terms of assembly, interacts with FLNA. In terms of processing, phosphorylated by ROCK, leading to activate the RacGAP activity. Isoform 1 is widely expressed with a higher level in kidney. Isoform 2 is mainly expressed in endothelial cells.

The protein resides in the cytoplasm. It is found in the cytoskeleton. It localises to the cell junction. Its subcellular location is the adherens junction. The protein localises to the focal adhesion. The protein resides in the cell projection. Its function is as follows. Rho GTPase-activating protein involved in cell polarity, cell morphology and cytoskeletal organization. Acts as a GTPase activator for the Rac-type GTPase by converting it to an inactive GDP-bound state. Controls actin remodeling by inactivating Rac downstream of Rho leading to suppress leading edge protrusion and promotes cell retraction to achieve cellular polarity. Able to suppress RAC1 and CDC42 activity in vitro. Overexpression induces cell rounding with partial or complete disruption of actin stress fibers and formation of membrane ruffles, lamellipodia, and filopodia. Isoform 2 is a vascular cell-specific GAP involved in modulation of angiogenesis. In Homo sapiens (Human), this protein is Rho GTPase-activating protein 24 (ARHGAP24).